A 221-amino-acid polypeptide reads, in one-letter code: ATP-dependent dethiobiotin synthetase BioD (221 aa).

ATP is bound at residue 11 to 16; it reads DIGKTL. T15 contributes to the Mg(2+) binding site. K35 is a catalytic residue. T39 is a binding site for substrate. ATP contacts are provided by residues D44 and 103–106; that span reads EGAG. D44 and E103 together coordinate Mg(2+).

Belongs to the dethiobiotin synthetase family. Homodimer. Requires Mg(2+) as cofactor.

The protein localises to the cytoplasm. The enzyme catalyses (7R,8S)-7,8-diammoniononanoate + CO2 + ATP = (4R,5S)-dethiobiotin + ADP + phosphate + 3 H(+). Its pathway is cofactor biosynthesis; biotin biosynthesis; biotin from 7,8-diaminononanoate: step 1/2. Its function is as follows. Catalyzes a mechanistically unusual reaction, the ATP-dependent insertion of CO2 between the N7 and N8 nitrogen atoms of 7,8-diaminopelargonic acid (DAPA, also called 7,8-diammoniononanoate) to form a ureido ring. The sequence is that of ATP-dependent dethiobiotin synthetase BioD from Leptospira borgpetersenii serovar Hardjo-bovis (strain L550).